Reading from the N-terminus, the 1188-residue chain is Probable RNA helicase armi (1188 aa).

Position 723-730 (723-730 (GPPGSGKT)) interacts with ATP. Positions 862 to 865 (DEAG) match the DEAG box motif.

Belongs to the DNA2/NAM7 helicase family. SDE3 subfamily. Forms a complex with piwi and fs(1)Yb; this interaction is required for proper piRNA loading and nuclear localization of piwi. The interaction of piwi and fs(1)Yb is likely to occur via armi. In terms of tissue distribution, abundant in oocytes and syncytial blastoderm. Expressed at low level throughout development, including somatic tissues. First apparent early in oogenesis, in the cytoplasm of stem cells and mitotically dividing cystoblasts. In regions 2a and 2b of the germarium, it is most concentrated in the center of the germline cysts, where the pro-oocyte is located. In stage 1 and early stage 2 egg chambers, it accumulates at the anterior of the oocyte, near the ring canals. It also extends through the ring canals forming a branched structure that links the early oocyte with adjacent nurse cells. In stage 3 cysts, it accumulates at the posterior cortex and localizes to extensions that pass through the oocyte into the nurse cells. Through stages 4 to 7, it continues to be somewhat enriched at the posterior cortex of the oocyte, but at significantly lower level. In stage 9 to 10 egg chambers, it is found throughout the cytoplasm of the oocyte and nurse cells, with slight enrichment at the oocyte cortex.

The protein resides in the cytoplasm. It catalyses the reaction ATP + H2O = ADP + phosphate + H(+). In terms of biological role, probable RNA helicase required for axial polarization of the oocyte during early and mid oogenesis. Plays a central role in RNA interference (RNAi) process, a process that mediates mRNA destruction of translational repression. Required for the assembly of the RISC complex, a complex required for target RNA destruction or repression. May be required in the RISC assembly to unwind miRNAs, in the production of single-stranded miRNA from the double-stranded miRNA, a key step in RISC formation. Required both for the translational control of oskar (osk) mRNA and cytoskeletal polarization in the oocyte. Required for somatic primary piRNA biogenesis. Involved in repression of long interspersed nuclear elements (LINEs) including HeT-A, I-element and TART LINEs. The sequence is that of Probable RNA helicase armi from Drosophila melanogaster (Fruit fly).